We begin with the raw amino-acid sequence, 266 residues long: Putative carbamate hydrolase RutD (266 aa).

The protein belongs to the AB hydrolase superfamily. Hydrolase RutD family.

It catalyses the reaction carbamate + 2 H(+) = NH4(+) + CO2. Involved in pyrimidine catabolism. May facilitate the hydrolysis of carbamate, a reaction that can also occur spontaneously. The polypeptide is Putative carbamate hydrolase RutD (Escherichia coli O127:H6 (strain E2348/69 / EPEC)).